The chain runs to 261 residues: Carnitinyl-CoA dehydratase (261 aa).

Glu111 (nucleophile) is an active-site residue. The active-site Proton acceptor is the Glu131.

This sequence belongs to the enoyl-CoA hydratase/isomerase family.

The enzyme catalyses (R)-carnitinyl-CoA = crotonobetainyl-CoA + H2O. Its pathway is amine and polyamine metabolism; carnitine metabolism. Its function is as follows. Catalyzes the reversible dehydration of L-carnitinyl-CoA to crotonobetainyl-CoA. The sequence is that of Carnitinyl-CoA dehydratase from Shigella flexneri.